The sequence spans 356 residues: Guanine nucleotide-binding protein alpha-2 subunit (356 aa).

Residue Gly2 is the site of N-myristoyl glycine attachment. Cys4 is lipidated: S-palmitoyl cysteine. One can recognise a G-alpha domain in the interval 32–356 (RTVKLLLLGA…QSNLHKSGLY (325 aa)). Positions 35-48 (KLLLLGAGECGKST) are G1 motif. Residues Glu43, Gly45, Lys46, Ser47, Thr48, Asp153, Leu178, Thr184, Gly206, Asn272, Lys273, Asp275, and Ala328 each coordinate GTP. Ser47 lines the Mg(2+) pocket. A G2 motif region spans residues 176 to 184 (DTLLLRTKT). Thr184 lines the Mg(2+) pocket. A G3 motif region spans residues 199 to 208 (FRVFDVGGQR). Residues 268 to 275 (ILFLNKKD) form a G4 motif region. The G5 motif stretch occupies residues 326 to 331 (TCATDT).

It belongs to the G-alpha family. G(q) subfamily. As to quaternary structure, g proteins are composed of 3 units; alpha, beta and gamma. The alpha chain contains the guanine nucleotide binding site. Requires Mg(2+) as cofactor.

Functionally, guanine nucleotide-binding proteins (G proteins) are involved as modulators or transducers in various transmembrane signaling systems. Involved in behavioral responses to P.aeruginosa by controlling the expression of daf-7, a member of the TGF-beta family, in ASJ sensory neurons. The protein is Guanine nucleotide-binding protein alpha-2 subunit (gpa-2) of Caenorhabditis elegans.